Here is an 863-residue protein sequence, read N- to C-terminus: Chloride channel protein A (863 aa).

Over 1–124 (MFRNNNNDNN…TSKLNHMLKT (124 aa)) the chain is Cytoplasmic. A disordered region spans residues 48–78 (ENGLINNNNNSHNNNNGGNNNNHGPSKVTHR). Residues 49 to 71 (NGLINNNNNSHNNNNGGNNNNHG) are compositionally biased toward low complexity. The next 7 membrane-spanning stretches (helical) occupy residues 125-145 (FGKWIICFMIGVLVGITAYLV), 171-191 (IAFLVYYSINILFGVSASLVI), 228-248 (LVSLILAYSSGLILGPEGPMI), 289-309 (GAAAGVAAAFGAPIGGVLFGF), 324-344 (TFFACLIATFTTNIILQGFDM), 367-387 (LIPFALIGVAGGLFGALFVNL), and 408-428 (VLEVFILITITSTILYCCAAF). Residues 434–460 (KTQANGSQTNSLDTSSSSILSSSGDNS) form a disordered region. Residues 439–460 (GSQTNSLDTSSSSILSSSGDNS) show a composition bias toward low complexity. 3 helical membrane-spanning segments follow: residues 518-538 (IFTIPTLAVFSLISFILTTIT), 539-559 (SGLMLASGLFIPMMLVGATFG), and 561-581 (LVGQVIALFVSVDPCIYALVG). 2 CBS domains span residues 661–742 (MKTE…CHEQ) and 816–863 (MNLS…KDLL).

The protein belongs to the chloride channel (TC 2.A.49) family.

Its subcellular location is the membrane. Its function is as follows. Voltage-gated chloride channel. Chloride channels may have several functions including the regulation of cell volume, membrane potential stabilization and signal transduction. This chain is Chloride channel protein A (clcA), found in Dictyostelium discoideum (Social amoeba).